The sequence spans 198 residues: MEKFNTHTGVAAPLNRSNVDTDQIIPAVYLKRVTRTGFEDGLFAGWRKDPEFILNQEPYKNASVLVAGPDFGTGSSREHAVWALMDYGFRVVLSSRFADIFRGNSGKAGLLAAQMEQSDIELIWKLLEQQPGAEITVNLEDRTVTLGTHTFGFDVDDYTRWRLMEGLDDIGLTLRNEEAIEAFESQRASFKPRTIPAS.

It belongs to the LeuD family. LeuD type 1 subfamily. As to quaternary structure, heterodimer of LeuC and LeuD.

It carries out the reaction (2R,3S)-3-isopropylmalate = (2S)-2-isopropylmalate. The protein operates within amino-acid biosynthesis; L-leucine biosynthesis; L-leucine from 3-methyl-2-oxobutanoate: step 2/4. Its function is as follows. Catalyzes the isomerization between 2-isopropylmalate and 3-isopropylmalate, via the formation of 2-isopropylmaleate. The polypeptide is 3-isopropylmalate dehydratase small subunit (Corynebacterium jeikeium (strain K411)).